A 195-amino-acid chain; its full sequence is Large ribosomal subunit protein bL32m (195 aa).

4 residues coordinate Zn(2+): C95, C98, C108, and C111.

This sequence belongs to the bacterial ribosomal protein bL32 family. Component of the mitochondrial large ribosomal subunit (mt-LSU).

The protein resides in the mitochondrion. In terms of biological role, component of the mitochondrial large ribosomal subunit (mt-LSU). The mitochondrial ribosome (mitoribosome) is a large ribonucleoprotein complex responsible for the synthesis of proteins inside mitochondria. This is Large ribosomal subunit protein bL32m (mRpL32) from Drosophila melanogaster (Fruit fly).